We begin with the raw amino-acid sequence, 416 residues long: Histidine--tRNA ligase (416 aa).

The protein belongs to the class-II aminoacyl-tRNA synthetase family. As to quaternary structure, homodimer.

Its subcellular location is the cytoplasm. The catalysed reaction is tRNA(His) + L-histidine + ATP = L-histidyl-tRNA(His) + AMP + diphosphate + H(+). This chain is Histidine--tRNA ligase, found in Dictyoglomus thermophilum (strain ATCC 35947 / DSM 3960 / H-6-12).